A 210-amino-acid chain; its full sequence is Probable membrane protein Rv1733c (210 aa).

2 consecutive transmembrane segments (helical) span residues 43 to 63 and 165 to 185; these read AVVM…AAAA and ALAA…LLAL.

It is found in the cell membrane. This is Probable membrane protein Rv1733c from Mycobacterium tuberculosis (strain ATCC 25618 / H37Rv).